A 1167-amino-acid chain; its full sequence is Chromosome partition protein Smc (1167 aa).

32–39 (PNGCGKSN) is an ATP binding site. Coiled-coil stretches lie at residues 170–274 (ISKY…RIET), 310–390 (QREL…HNRD), 468–500 (GLQE…LETL), 653–870 (ALLR…ERAL), and 982–1011 (EYLD…ETRG).

It belongs to the SMC family. As to quaternary structure, homodimer.

The protein resides in the cytoplasm. In terms of biological role, required for chromosome condensation and partitioning. This chain is Chromosome partition protein Smc, found in Xanthomonas oryzae pv. oryzae (strain KACC10331 / KXO85).